A 486-amino-acid chain; its full sequence is Maintenance of mitochondrial morphology protein 1 (486 aa).

Residues 1–19 (MSNDTSAQPAQSSLSFTQG) lie on the Lumenal side of the membrane. The chain crosses the membrane as a helical span at residues 20 to 40 (LLVGQLSVVLLIGAFIKFFIF). The Cytoplasmic portion of the chain corresponds to 41-486 (GEASPSSSRS…GSLPDVVPVT (446 aa)). Disordered stretches follow at residues 45-98 (PSSS…RSIL), 269-318 (QTST…AGTT), 393-412 (VRGQEEQQEVGSSGNAGVST), and 420-486 (ARDA…VPVT). Basic residues predominate over residues 51-61 (QTRRTSPHKRS). Residues 70–79 (LGSRSLKEKP) show a composition bias toward basic and acidic residues. Composition is skewed to polar residues over residues 80-96 (SSNVLRPVPSSSTNTRS), 269-291 (QTSTHLATSPSNIDPTLQTNDYS), 307-318 (EQATQANNAGTT), and 401-412 (EVGSSGNAGVST). Residues 125-382 (QPESLDWFNV…EPRVQVVALP (258 aa)) form the SMP-LTD domain. Composition is skewed to basic and acidic residues over residues 429-440 (HATRDADMEGLR) and 462-473 (DSREQACRDDPF).

The protein belongs to the MMM1 family. Homodimer. Component of the ER-mitochondria encounter structure (ERMES) or MDM complex, composed of MMM1, MDM10, MDM12 and MDM34. An MMM1 homodimer associates with one molecule of MDM12 on each side in a pairwise head-to-tail manner, and the SMP-LTD domains of MMM1 and MDM12 generate a continuous hydrophobic tunnel for phospholipid trafficking.

It is found in the endoplasmic reticulum membrane. In terms of biological role, component of the ERMES/MDM complex, which serves as a molecular tether to connect the endoplasmic reticulum (ER) and mitochondria. Components of this complex are involved in the control of mitochondrial shape and protein biogenesis, and function in nonvesicular lipid trafficking between the ER and mitochondria. The MDM12-MMM1 subcomplex functions in the major beta-barrel assembly pathway that is responsible for biogenesis of all outer membrane beta-barrel proteins, and acts in a late step after the SAM complex. The MDM10-MDM12-MMM1 subcomplex further acts in the TOM40-specific pathway after the action of the MDM12-MMM1 complex. Essential for establishing and maintaining the structure of mitochondria and maintenance of mtDNA nucleoids. This chain is Maintenance of mitochondrial morphology protein 1, found in Coccidioides immitis (strain RS) (Valley fever fungus).